Consider the following 743-residue polypeptide: Tegument protein UL46 homolog (743 aa).

Disordered regions lie at residues 437-481 (GCPP…VSSA), 522-590 (HQRS…SGYM), and 693-743 (RVRL…VSSL). The span at 526–552 (DSSSSDNSSCSSTETEYITISSTPSPT) shows a compositional bias: low complexity. Composition is skewed to polar residues over residues 573–586 (QPAN…SPAN) and 697–716 (GTTT…TPSS). Over residues 722–743 (RTLSTSESPESSPEQQERVSSL) the composition is skewed to low complexity.

Belongs to the herpesviridae HHV-1 VP11/12 protein family. Interacts with VP16.

The protein resides in the virion tegument. It localises to the host cell membrane. In terms of biological role, abundant tegument protein. Trans-activates the immediate early genes. This chain is Tegument protein UL46 homolog, found in Equus caballus (Horse).